A 442-amino-acid chain; its full sequence is Elongation factor 1-alpha (442 aa).

In terms of domain architecture, tr-type G spans 6 to 229; it reads KPHMNLIVIG…ALDNLKPPSV (224 aa). The G1 stretch occupies residues 15–22; sequence GHVDHGKS. 15-22 provides a ligand contact to GTP; the sequence is GHVDHGKS. Serine 22 serves as a coordination point for Mg(2+). The G2 stretch occupies residues 71-75; it reads GVTID. Residues 92 to 95 are G3; that stretch reads DAPG. GTP is bound by residues 92 to 96 and 154 to 157; these read DAPGH and NKMD. A G4 region spans residues 154 to 157; the sequence is NKMD. Residues 195-197 form a G5 region; that stretch reads SAW.

Belongs to the TRAFAC class translation factor GTPase superfamily. Classic translation factor GTPase family. EF-Tu/EF-1A subfamily.

The protein localises to the cytoplasm. It catalyses the reaction GTP + H2O = GDP + phosphate + H(+). GTP hydrolase that promotes the GTP-dependent binding of aminoacyl-tRNA to the A-site of ribosomes during protein biosynthesis. This is Elongation factor 1-alpha from Ignicoccus hospitalis (strain KIN4/I / DSM 18386 / JCM 14125).